The following is a 415-amino-acid chain: Polyadenylate-binding protein RBP45C (415 aa).

The tract at residues 1 to 77 (MMQQPPPASN…GGSQNPGSAG (77 aa)) is disordered. Positions 23 to 64 (QQAYLQQQQSWMMQHQQQQQGQPPAGWNQQSAPSSGQPQQQQ) are enriched in low complexity. RRM domains follow at residues 80–160 (RSLW…WAQL), 173–252 (HTVF…PAAN), and 278–350 (TTIF…WGRS). Over residues 344–356 (RLSWGRSPSNKQT) the composition is skewed to polar residues. Residues 344–369 (RLSWGRSPSNKQTQPDQAQYGGGGGY) form a disordered region.

It belongs to the polyadenylate-binding RBP45 family. Interacts with the poly(A) tail of mRNA in nucleus. As to expression, mostly expressed in seedlings and stems, and, to a lower extent, in leaves and flowers.

The protein resides in the nucleus. Functionally, heterogeneous nuclear ribonucleoprotein (hnRNP)-protein binding the poly(A) tail of mRNA and probably involved in some steps of pre-mRNA maturation. This chain is Polyadenylate-binding protein RBP45C (RBP45C), found in Arabidopsis thaliana (Mouse-ear cress).